A 349-amino-acid polypeptide reads, in one-letter code: Two pore potassium channel b (349 aa).

Positions Met-1–Pro-53 are disordered. Residues Met-1–Arg-66 lie on the Cytoplasmic side of the membrane. The helical transmembrane segment at Leu-67–Met-87 threads the bilayer. Residues Asp-100 to Pro-119 constitute an intramembrane region (pore-forming). Residues Ala-123–Leu-143 form a helical membrane-spanning segment. Residues Ser-144–Leu-180 are Cytoplasmic-facing. A helical membrane pass occupies residues Tyr-181–Val-201. Positions Asp-208–Phe-227 form an intramembrane region, pore-forming. A helical transmembrane segment spans residues Ala-234 to Ala-254. Over Ala-255 to Arg-349 the chain is Cytoplasmic. EF-hand domains lie at Leu-271–Lys-306 and Glu-310–Pro-345. Asp-284, Asp-286, Asp-288, Arg-290, Asp-295, Asp-323, Asp-325, Ser-327, Thr-329, and Asp-334 together coordinate Ca(2+). Positions His-326–Arg-349 are disordered.

This sequence belongs to the two pore domain potassium channel (TC 1.A.1.7) family. Homodimer.

It localises to the vacuole membrane. Its function is as follows. Highly selective inward-rectifying potassium channel that is specifically located in the tonoplast of protein storage vacuoles. Functions independently of the voltage difference across the membrane. The protein is Two pore potassium channel b (TPKB) of Oryza sativa subsp. japonica (Rice).